A 293-amino-acid polypeptide reads, in one-letter code: 4-hydroxy-tetrahydrodipicolinate synthase (293 aa).

Threonine 45 lines the pyruvate pocket. Residue tyrosine 133 is the Proton donor/acceptor of the active site. The active-site Schiff-base intermediate with substrate is the lysine 161. Isoleucine 203 serves as a coordination point for pyruvate.

This sequence belongs to the DapA family. Homotetramer; dimer of dimers.

It localises to the cytoplasm. The enzyme catalyses L-aspartate 4-semialdehyde + pyruvate = (2S,4S)-4-hydroxy-2,3,4,5-tetrahydrodipicolinate + H2O + H(+). Its pathway is amino-acid biosynthesis; L-lysine biosynthesis via DAP pathway; (S)-tetrahydrodipicolinate from L-aspartate: step 3/4. Its function is as follows. Catalyzes the condensation of (S)-aspartate-beta-semialdehyde [(S)-ASA] and pyruvate to 4-hydroxy-tetrahydrodipicolinate (HTPA). The polypeptide is 4-hydroxy-tetrahydrodipicolinate synthase (Aliivibrio salmonicida (strain LFI1238) (Vibrio salmonicida (strain LFI1238))).